Consider the following 322-residue polypeptide: Beta-ketoacyl-[acyl-carrier-protein] synthase III (322 aa).

Residues C113 and H249 contribute to the active site. An ACP-binding region spans residues 250 to 254 (QANLR). Residue N279 is part of the active site.

Belongs to the thiolase-like superfamily. FabH family. In terms of assembly, homodimer.

It is found in the cytoplasm. The catalysed reaction is malonyl-[ACP] + acetyl-CoA + H(+) = 3-oxobutanoyl-[ACP] + CO2 + CoA. The protein operates within lipid metabolism; fatty acid biosynthesis. Catalyzes the condensation reaction of fatty acid synthesis by the addition to an acyl acceptor of two carbons from malonyl-ACP. Catalyzes the first condensation reaction which initiates fatty acid synthesis and may therefore play a role in governing the total rate of fatty acid production. Possesses both acetoacetyl-ACP synthase and acetyl transacylase activities. Its substrate specificity determines the biosynthesis of branched-chain and/or straight-chain of fatty acids. The sequence is that of Beta-ketoacyl-[acyl-carrier-protein] synthase III from Marinobacter nauticus (strain ATCC 700491 / DSM 11845 / VT8) (Marinobacter aquaeolei).